Here is a 389-residue protein sequence, read N- to C-terminus: Chalcone synthase 3 (389 aa).

The active site involves C164.

Belongs to the thiolase-like superfamily. Chalcone/stilbene synthases family.

The catalysed reaction is (E)-4-coumaroyl-CoA + 3 malonyl-CoA + 3 H(+) = 2',4,4',6'-tetrahydroxychalcone + 3 CO2 + 4 CoA. It participates in secondary metabolite biosynthesis; flavonoid biosynthesis. Functionally, the primary product of this enzyme is 4,2',4',6'-tetrahydroxychalcone (also termed naringenin-chalcone or chalcone) which can under specific conditions spontaneously isomerize into naringenin. This is Chalcone synthase 3 (CHS3) from Pisum sativum (Garden pea).